A 172-amino-acid polypeptide reads, in one-letter code: MVDKRESYTKEDLLASGRGELFGAKGPQLPAPNMLMMDRVVKMTETGGNFDKGYVEAELDINPDLWFFGCHFIGDPVMPGCLGLDAMWQLVGFYLGWLGSEGKGRALGVGEVKFTGQVLPTAKKVTYRIHFKRIVNRRLIMGLADGEVLVDGRLIYTASDLKVGLFQDTSAF.

His-71 is a catalytic residue.

The protein belongs to the thioester dehydratase family. FabA subfamily. As to quaternary structure, homodimer.

Its subcellular location is the cytoplasm. It catalyses the reaction a (3R)-hydroxyacyl-[ACP] = a (2E)-enoyl-[ACP] + H2O. The enzyme catalyses (3R)-hydroxydecanoyl-[ACP] = (2E)-decenoyl-[ACP] + H2O. It carries out the reaction (2E)-decenoyl-[ACP] = (3Z)-decenoyl-[ACP]. Its pathway is lipid metabolism; fatty acid biosynthesis. Its function is as follows. Necessary for the introduction of cis unsaturation into fatty acids. Catalyzes the dehydration of (3R)-3-hydroxydecanoyl-ACP to E-(2)-decenoyl-ACP and then its isomerization to Z-(3)-decenoyl-ACP. Can catalyze the dehydratase reaction for beta-hydroxyacyl-ACPs with saturated chain lengths up to 16:0, being most active on intermediate chain length. This chain is 3-hydroxydecanoyl-[acyl-carrier-protein] dehydratase, found in Escherichia coli (strain 55989 / EAEC).